We begin with the raw amino-acid sequence, 112 residues long: Prothymosin alpha (112 aa).

Methionine 1 bears the N-acetylmethionine mark. The disordered stretch occupies residues 1-112 (MSDAAVDTSS…KKQKKTDEDD (112 aa)). Serine 2 bears the N-acetylserine; in Prothymosin alpha, N-terminally processed mark. Serine 2 is modified (phosphoserine). At threonine 8 the chain carries Phosphothreonine. Phosphoserine is present on residues serine 9 and serine 10. 2 positions are modified to phosphothreonine: threonine 13 and threonine 14. Residues 13–31 (TTKDLKEKKEVVEEAENGR) are compositionally biased toward basic and acidic residues. Residue lysine 15 is modified to N6-acetyllysine; alternate. Residue lysine 15 is modified to N6-succinyllysine; alternate. Acidic residues predominate over residues 43 to 84 (ENGEQEADNEVDEEEEEGGEEEEEEEEGDGEEEDGDEDEEAE). The span at 101–112 (ETKKQKKTDEDD) shows a compositional bias: basic and acidic residues. Threonine 102 carries the post-translational modification Phosphothreonine. Residue lysine 103 is modified to N6-acetyllysine; alternate. A Glycyl lysine isopeptide (Lys-Gly) (interchain with G-Cter in SUMO2); alternate cross-link involves residue lysine 103. At threonine 108 the chain carries Phosphothreonine.

The protein belongs to the pro/parathymosin family. In terms of assembly, interacts with NUPR1; regulates apoptotic process. Covalently linked to a small RNA of about 20 nucleotides.

Its subcellular location is the nucleus. Functionally, prothymosin alpha may mediate immune function by conferring resistance to certain opportunistic infections. The sequence is that of Prothymosin alpha (Ptma) from Rattus norvegicus (Rat).